The sequence spans 204 residues: dITP/XTP pyrophosphatase (204 aa).

14–19 (THNKGK) serves as a coordination point for substrate. Mg(2+)-binding residues include Glu46 and Asp75. Residue Asp75 is the Proton acceptor of the active site. Residues Ser76, 161–164 (FGYD), Lys184, and 189–190 (HR) each bind substrate.

It belongs to the HAM1 NTPase family. Homodimer. Requires Mg(2+) as cofactor.

The enzyme catalyses XTP + H2O = XMP + diphosphate + H(+). It carries out the reaction dITP + H2O = dIMP + diphosphate + H(+). It catalyses the reaction ITP + H2O = IMP + diphosphate + H(+). Its function is as follows. Pyrophosphatase that catalyzes the hydrolysis of nucleoside triphosphates to their monophosphate derivatives, with a high preference for the non-canonical purine nucleotides XTP (xanthosine triphosphate), dITP (deoxyinosine triphosphate) and ITP. Seems to function as a house-cleaning enzyme that removes non-canonical purine nucleotides from the nucleotide pool, thus preventing their incorporation into DNA/RNA and avoiding chromosomal lesions. The polypeptide is dITP/XTP pyrophosphatase (Ruegeria pomeroyi (strain ATCC 700808 / DSM 15171 / DSS-3) (Silicibacter pomeroyi)).